The following is a 581-amino-acid chain: MTVTYSSQVANARLGSFSRLLLCWRGSIYKLLYGEFLIFLLCYYIIRFIYRMALTDEQQVIFEKLTLYCDSYIQLIPISFVLGFYVTLVVTRWWNQYENLPWPDRLMNLVSCFVEGKDEQGRLLRRTLMRYANLGNVLILRSISAAVYKRFPSPQHLVKAGFMTPSEHKHLEKLSLPHNSFWMPWVWFANLSTKAWIGGRIRDPVLLQSLLDEMNTLRTQCGHLYAYDWISVPLVYTQVVTVAVYSFFLACLVGRQFLNPAKAYPGHEMDLVVPLFTFLQFFFYAGWLKVAEQLINPFGEDDDDFETNWIVDRSLQVSLLAVDEMHQDLPPMERDMYWNDPEPHPPYTAASAQSRRPSFFGSTFNISLGKEDMEFQPEEEEEAHTGILGHFLGLQSSDHQPPRTNSKTKLLWPKKEGHFHEGHPKNLRGARLDSSDQEDSKAWREGGFKSAALCGRPGYHSAPQTPLGHTPMVFPPEESAPLGLRRVSGIDEAAKDQSLQPATPSIKKSFELLPESAEASAEPLQGSHVRRKTVEFNLADLSEAPEHLKEPNLEPPMGIHAIIKDHRDPYWALENRDEAHS.

At 1 to 31 the chain is on the cytoplasmic side; that stretch reads MTVTYSSQVANARLGSFSRLLLCWRGSIYKL. Ala10 contacts Ca(2+). Residues 32-51 form a helical membrane-spanning segment; that stretch reads LYGEFLIFLLCYYIIRFIYR. Topologically, residues 52-60 are extracellular; the sequence is MALTDEQQV. Residues 61-82 form a helical membrane-spanning segment; the sequence is IFEKLTLYCDSYIQLIPISFVL. At 83–237 the chain is on the cytoplasmic side; sequence GFYVTLVVTR…DWISVPLVYT (155 aa). Residues 238–255 form a helical membrane-spanning segment; the sequence is QVVTVAVYSFFLACLVGR. At 256–274 the chain is on the extracellular side; that stretch reads QFLNPAKAYPGHEMDLVVP. A helical membrane pass occupies residues 275 to 288; that stretch reads LFTFLQFFFYAGWL. Topologically, residues 289 to 581 are cytoplasmic; the sequence is KVAEQLINPF…ALENRDEAHS (293 aa). Ca(2+)-binding residues include Gln293, Asn296, Asp301, and Asp304. The tract at residues 416–440 is disordered; sequence EGHFHEGHPKNLRGARLDSSDQEDS.

This sequence belongs to the anion channel-forming bestrophin (TC 1.A.46) family. Calcium-sensitive chloride channel subfamily. Interacts with YWHAG; this interaction promotes the ligand-gated L-glutamate channel activity leading to the positive regulation of NMDA glutamate receptor activity through the L-glutamate secretion. Post-translationally, phosphorylated (in vitro). Dephosphorylated (in vitro) by PP2A.

The protein resides in the cell membrane. It localises to the basolateral cell membrane. It catalyses the reaction chloride(in) = chloride(out). It carries out the reaction hydrogencarbonate(in) = hydrogencarbonate(out). The catalysed reaction is 4-aminobutanoate(in) = 4-aminobutanoate(out). The enzyme catalyses L-glutamate(out) = L-glutamate(in). Its function is as follows. Ligand-gated anion channel that allows the movement of anions across cell membranes when activated by calcium (Ca2+). Allows the movement of chloride and hydrogencarbonate. Found in a partially open conformation leading to significantly smaller chloride movement. Upon F2R/PAR-1 activation, the sequestered calcium is released into the cytosol of astrocytes, leading to the (Ca2+)-dependent release of L-glutamate into the synaptic cleft that targets the neuronal postsynaptic GRIN2A/NMDAR receptor resulting in the synaptic plasticity regulation. Upon activation of the norepinephrine-alpha-1 adrenergic receptor signaling pathway, transports as well D-serine than L-glutamate in a (Ca2+)-dependent manner, leading to activation of adjacent NMDAR receptors and therefore regulates the heterosynaptic long-term depression and metaplasticity during initial memory acquisition. Releases the 4-aminobutanoate neurotransmitter in a (Ca2+)-dependent manner, and participates in its tonic release from cerebellar glial cells. The protein is Bestrophin-1 of Sus scrofa (Pig).